The following is a 132-amino-acid chain: Fatty acid-binding protein (132 aa).

(5Z,8Z,11Z,14Z)-eicosatetraenoate contacts are provided by residues Arg107 and 127–129 (RNY). (9Z)-octadecenoate-binding positions include Arg107 and 127 to 129 (RNY).

Belongs to the calycin superfamily. Fatty-acid binding protein (FABP) family.

It is found in the cytoplasm. Its function is as follows. May play a role in the transport of fatty acids. Binds to various fatty acids but not retinoids. This is Fatty acid-binding protein from Schistosoma japonicum (Blood fluke).